Reading from the N-terminus, the 643-residue chain is MSDMVKITFPDGAVKEFAKGTTTEDIAASISPGLKKKSLAGKLNGKEIDLRTPINEDGTVEIITEGSEEGLQIMRHSAAHLLAQAIKRIYKDVKFGVGPVIENGFYYDVEMDEAITPEDLPKIEKEMKKIVNANLPIVRKEVSREEAKARFAEIGDDLKLELLDAIPEGETVSIYEQGEFFDLCRGVHVPSTGKIKEFKLLSLAGAYWRGDSKNQMLQRVYGTAFFKKADLEEHLRMLEEAKERDHRKLGKELKLFANSQKVGQGLPLWLPKGATIRRVIERYIVDKEISLGYEHVYTPVLGSKELYETSGHWDHYQEGMFPPMEMDNETLVLRPMNCPHHMMIYKQDIHSYRELPIRIAELGTMHRYEMSGALSGLQRVRGMTLNDAHIFVRPDQIKDEFIRTVRLIQDVYEDFGLSDYTFRLSYRDPEDTEKYFDDDEMWNKAQSMLKEAMDEIGHDYYEAEGEAAFYGPKLDVQVKTAIGKEETLSTVQLDFLLPERFDLTYIGEDGKQHRPVVIHRGVVSTMERFVAFLIEEHKGALPTWLAPVQFQVIPVSPAVHLDYAKKVQERLQCEGLRVEVDSRDEKIGYKIREAQMQKIPYMLVVGDQEAENGAVNVRKYGEQNSETISLDEFVKKAVAEAKK.

A TGS domain is found at 3-64 (DMVKITFPDG…NEDGTVEIIT (62 aa)). The interval 245-542 (DHRKLGKELK…LIEEHKGALP (298 aa)) is catalytic. Zn(2+) is bound by residues Cys338, His389, and His519.

This sequence belongs to the class-II aminoacyl-tRNA synthetase family. Homodimer. Zn(2+) serves as cofactor.

Its subcellular location is the cytoplasm. The catalysed reaction is tRNA(Thr) + L-threonine + ATP = L-threonyl-tRNA(Thr) + AMP + diphosphate + H(+). In terms of biological role, catalyzes the attachment of threonine to tRNA(Thr) in a two-step reaction: L-threonine is first activated by ATP to form Thr-AMP and then transferred to the acceptor end of tRNA(Thr). Also edits incorrectly charged L-seryl-tRNA(Thr). This Bacillus subtilis (strain 168) protein is Threonine--tRNA ligase 1 (thrS).